Consider the following 176-residue polypeptide: Ribosome maturation factor RimM (176 aa).

The PRC barrel domain maps to 97–176 (EDEFYWRDLI…QILVDWDPDF (80 aa)).

Belongs to the RimM family. As to quaternary structure, binds ribosomal protein uS19.

The protein localises to the cytoplasm. Its function is as follows. An accessory protein needed during the final step in the assembly of 30S ribosomal subunit, possibly for assembly of the head region. Essential for efficient processing of 16S rRNA. May be needed both before and after RbfA during the maturation of 16S rRNA. It has affinity for free ribosomal 30S subunits but not for 70S ribosomes. This is Ribosome maturation factor RimM from Shewanella halifaxensis (strain HAW-EB4).